Consider the following 156-residue polypeptide: MGRSISVSFGLLVVFLSLSGTGADQDCLPGWSSHEGHCYKVFNLNKTWEDAKKFCTEQANSGHLVSIDSKKEANFVAELVSQNIKETRRTDFVWIGLRAEDKRQHCSSEWSDGSSINYQNWIEAESKKCLGLEKQTRYRKWVNLNCGQPYRFTCEI.

An N-terminal signal peptide occupies residues Met-1–Ala-23. The cysteines at positions 27 and 38 are disulfide-linked. The C-type lectin domain maps to His-34 to Glu-155. N-linked (GlcNAc...) asparagine glycosylation is present at Asn-45. Intrachain disulfides connect Cys-55/Cys-154 and Cys-129/Cys-146.

Belongs to the snaclec family. As to quaternary structure, heterodimer; disulfide-linked. As to expression, expressed by the venom gland.

It is found in the secreted. In terms of biological role, interferes with one step of hemostasis (modulation of platelet aggregation, or coagulation cascade, for example). The sequence is that of Snaclec A4 from Macrovipera lebetinus (Levantine viper).